Consider the following 205-residue polypeptide: MTTDYEYSLWPTLSLISGIDEAGRGPLAGPVVAAAVIFPRWFRPRHAGLDKLDDSKKLSPNLREQLAPTIKTFAAFWAVAVIEPDIIDRINIFQATMQAMNNAVASLHQPPELILVDGNRFMPNAPIPYETIVKGDAKVFSIAAASVLAKTHRDAIMTAYGKEYPEYGFERHFGYPTASHIKAIETFGRTPVHRKSFRLKQLGEK.

The RNase H type-2 domain occupies 14 to 205; sequence SLISGIDEAG…SFRLKQLGEK (192 aa). A divalent metal cation is bound by residues D20, E21, and D117.

Belongs to the RNase HII family. Requires Mn(2+) as cofactor. The cofactor is Mg(2+).

The protein localises to the cytoplasm. It carries out the reaction Endonucleolytic cleavage to 5'-phosphomonoester.. In terms of biological role, endonuclease that specifically degrades the RNA of RNA-DNA hybrids. The chain is Ribonuclease HII from Chlorobium phaeobacteroides (strain DSM 266 / SMG 266 / 2430).